We begin with the raw amino-acid sequence, 329 residues long: GTP 3',8-cyclase (329 aa).

The 227-residue stretch at 8–234 (AFARKFYYLR…QQRARSDGPA (227 aa)) folds into the Radical SAM core domain. Arg17 lines the GTP pocket. Cys24 and Cys28 together coordinate [4Fe-4S] cluster. Residue Tyr30 coordinates S-adenosyl-L-methionine. Cys31 lines the [4Fe-4S] cluster pocket. Arg68 provides a ligand contact to GTP. Gly72 lines the S-adenosyl-L-methionine pocket. Residue Thr99 participates in GTP binding. Residue Ser123 participates in S-adenosyl-L-methionine binding. Lys160 serves as a coordination point for GTP. An S-adenosyl-L-methionine-binding site is contributed by Met194. Residues Cys257 and Cys260 each coordinate [4Fe-4S] cluster. Position 262-264 (262-264 (RLR)) interacts with GTP. Residue Cys274 coordinates [4Fe-4S] cluster.

This sequence belongs to the radical SAM superfamily. MoaA family. As to quaternary structure, monomer and homodimer. [4Fe-4S] cluster is required as a cofactor.

The catalysed reaction is GTP + AH2 + S-adenosyl-L-methionine = (8S)-3',8-cyclo-7,8-dihydroguanosine 5'-triphosphate + 5'-deoxyadenosine + L-methionine + A + H(+). It participates in cofactor biosynthesis; molybdopterin biosynthesis. Its function is as follows. Catalyzes the cyclization of GTP to (8S)-3',8-cyclo-7,8-dihydroguanosine 5'-triphosphate. The polypeptide is GTP 3',8-cyclase (Pectobacterium atrosepticum (strain SCRI 1043 / ATCC BAA-672) (Erwinia carotovora subsp. atroseptica)).